A 171-amino-acid polypeptide reads, in one-letter code: Phosphinothricin N-acetyltransferase (171 aa).

Residues valine 7 to leucine 171 form the N-acetyltransferase domain. Acetyl-CoA is bound by residues valine 94–valine 96, glycine 102–serine 107, and asparagine 133.

This sequence belongs to the acetyltransferase family. PAT/BAR subfamily.

It catalyses the reaction phosphinothricin + acetyl-CoA = N-acetylphosphinothricin + CoA + H(+). Its function is as follows. Inactivates phosphinothricin (PPT) by transfer of an acetyl group from acetyl CoA. The physiological substrate could be a structurally related compound. The protein is Phosphinothricin N-acetyltransferase of Streptomyces coelicolor (strain ATCC BAA-471 / A3(2) / M145).